The following is a 139-amino-acid chain: Diacylglycerol acyltransferase/mycolyltransferase Ag85A (139 aa).

The active-site Nucleophile is the serine 10. Substrate-binding residues include serine 10 and aspartate 38. Residue glutamate 114 is part of the active site. Substrate is bound by residues 116–119 (FVRT) and lysine 123.

This sequence belongs to the mycobacterial A85 antigen family. In terms of assembly, homodimer.

It localises to the secreted. It is found in the cell wall. The protein resides in the cytoplasm. It catalyses the reaction an acyl-CoA + a 1,2-diacyl-sn-glycerol = a triacyl-sn-glycerol + CoA. It carries out the reaction 2 alpha,alpha'-trehalose 6-mycolate = alpha,alpha'-trehalose 6,6'-bismycolate + alpha,alpha-trehalose. In terms of biological role, the antigen 85 proteins (FbpA, FbpB, FbpC) are responsible for the high affinity of mycobacteria for fibronectin, a large adhesive glycoprotein, which facilitates the attachment of M.tuberculosis to murine alveolar macrophages (AMs). They also help to maintain the integrity of the cell wall by catalyzing the transfer of mycolic acids to cell wall arabinogalactan, and through the synthesis of alpha,alpha-trehalose dimycolate (TDM, cord factor). They catalyze the transfer of a mycoloyl residue from one molecule of alpha,alpha-trehalose monomycolate (TMM) to another TMM, leading to the formation of TDM. FbpA mediates triacylglycerol (TAG) formation with long-chain acyl-CoA as the acyl donor and 1,2-dipalmitoyl-sn-glycerol (1,2-dipalmitin) as the acyl acceptor. It has a preference for C26:0-CoA over C18:1-CoA. In Mycobacterium marinum, this protein is Diacylglycerol acyltransferase/mycolyltransferase Ag85A (fbpA).